Consider the following 355-residue polypeptide: Probable NADPH-dependent quinone reductase tdiC (355 aa).

The protein belongs to the zinc-containing alcohol dehydrogenase family. Requires NADPH as cofactor.

It participates in secondary metabolite biosynthesis. In terms of biological role, probable NADPH-dependent quinone reductase; part of the gene cluster that mediates the biosynthesis of terrequinone A, an antitumor agent. The first step in the biosynthetic pathway for terrequinone A is formation of indole pyruvic acid (IPA) from L-tryptophan by the aminotransferase tdiD. The nonribosomal peptide synthase tdiA then immediately converts unstable IPA to didemethylasterriquinone D (DDAQ D), via condensation of 2 IPA molecules. The symmetric connectivity of the 2 IPA molecules is thought to arise by head-to-tail dual Claisen condensations facilitated by the TE domain. TdiB then catalyzes reverse prenylation by transferring dimethylallyl diphosphate to carbon atom 2' of DDAQ D, to yield asterriquinone C-1. Finally, tdiC and tdiE enzymes robustly convert asterriquinone C-1 to terrequinone A via a transformation involving regular prenylation at carbon atom 5, which requires elimination of the hydroxy group on C-5. This Emericella nidulans (strain FGSC A4 / ATCC 38163 / CBS 112.46 / NRRL 194 / M139) (Aspergillus nidulans) protein is Probable NADPH-dependent quinone reductase tdiC.